The primary structure comprises 276 residues: C-type lectin domain family 12 member B (276 aa).

Topologically, residues 1-43 (MSEEVTYATLTFQDSAGARNNRDGNNLRKRGHPAPSPIWRHAA) are cytoplasmic. The ITIM motif signature appears at 5–10 (VTYATL). Tyr7 carries the phosphotyrosine modification. A helical; Signal-anchor for type II membrane protein transmembrane segment spans residues 44–64 (LGLVTLCLMLLIGLVTLGMMF). The Extracellular portion of the chain corresponds to 65–276 (LQISNDINSD…AAPVKTEDLD (212 aa)). Asn91, Asn176, and Asn237 each carry an N-linked (GlcNAc...) asparagine glycan. Positions 150–264 (YQNSCYYFTT…CSAEIFWICE (115 aa)) constitute a C-type lectin domain. Cystine bridges form between Cys172–Cys263 and Cys242–Cys255.

In terms of assembly, homodimer. Interacts (via ITIM motif) with PTPN6. Interacts (via ITIM motif) with PTPN11; this interaction triggers dephosphorylation and activation of PTPN11. Post-translationally, N-glycosylated. Detected in colon, heart, kidney, liver, lung, mammary gland, ovary, spleen and testis. Expressed in melanocytes (at protein level).

Its subcellular location is the cell membrane. Inhibitory receptor postulated to negatively regulate immune and non-immune functions. Upon phosphorylation, recruits SH2 domain-containing PTPN6 and PTPN11 phosphatases to its ITIM motif and antagonizes activation signals. Although it inhibits KLRK1/NKG2D-mediated signaling, it does not bind known ligands of KLRK1/NKG2D and therefore is not its inhibitory counterpart. May limit activation of myeloid cell subsets in response to infection or tissue inflammation. May protect target cells against natural killer cell-mediated lysis. May negatively regulate cell cycle and differentiation of melanocytes via inactivation of STAT3. The sequence is that of C-type lectin domain family 12 member B from Homo sapiens (Human).